Here is a 55-residue protein sequence, read N- to C-terminus: ATP synthase protein 8 (55 aa).

A helical membrane pass occupies residues 11–31 (LIMFSVTLMLLIVLVINHFML).

It belongs to the ATPase protein 8 family. F-type ATPases have 2 components, CF(1) - the catalytic core - and CF(0) - the membrane proton channel.

It is found in the mitochondrion membrane. Mitochondrial membrane ATP synthase (F(1)F(0) ATP synthase or Complex V) produces ATP from ADP in the presence of a proton gradient across the membrane which is generated by electron transport complexes of the respiratory chain. F-type ATPases consist of two structural domains, F(1) - containing the extramembraneous catalytic core and F(0) - containing the membrane proton channel, linked together by a central stalk and a peripheral stalk. During catalysis, ATP synthesis in the catalytic domain of F(1) is coupled via a rotary mechanism of the central stalk subunits to proton translocation. Part of the complex F(0) domain. Minor subunit located with subunit a in the membrane. This Albinaria caerulea (Land snail) protein is ATP synthase protein 8 (MT-ATP8).